The chain runs to 1220 residues: DNA-directed RNA polymerase subunit beta' (1220 aa).

Residues cysteine 61, cysteine 63, cysteine 76, and cysteine 79 each contribute to the Zn(2+) site. Mg(2+) contacts are provided by aspartate 450, aspartate 452, and aspartate 454. A disordered region spans residues 1197–1220; sequence QPESESEEASDIPKLDDVAKTFDN. The segment covering 1207–1220 has biased composition (basic and acidic residues); the sequence is DIPKLDDVAKTFDN.

The protein belongs to the RNA polymerase beta' chain family. In terms of assembly, the RNAP catalytic core consists of 2 alpha, 1 beta, 1 beta' and 1 omega subunit. When a sigma factor is associated with the core the holoenzyme is formed, which can initiate transcription. It depends on Mg(2+) as a cofactor. Zn(2+) is required as a cofactor.

It carries out the reaction RNA(n) + a ribonucleoside 5'-triphosphate = RNA(n+1) + diphosphate. Functionally, DNA-dependent RNA polymerase catalyzes the transcription of DNA into RNA using the four ribonucleoside triphosphates as substrates. The polypeptide is DNA-directed RNA polymerase subunit beta' (Leuconostoc mesenteroides subsp. mesenteroides (strain ATCC 8293 / DSM 20343 / BCRC 11652 / CCM 1803 / JCM 6124 / NCDO 523 / NBRC 100496 / NCIMB 8023 / NCTC 12954 / NRRL B-1118 / 37Y)).